The following is a 98-amino-acid chain: NADH-ubiquinone oxidoreductase chain 4L (98 aa).

The next 3 helical transmembrane spans lie at 1-21 (MNLIDLILIAIYVIGISGLIF), 26-46 (IINILIISELNLGTLGMLFVL), and 61-81 (LYILTFTAAESAIGLAIVVIL).

It belongs to the complex I subunit 4L family.

Its subcellular location is the mitochondrion membrane. It carries out the reaction a ubiquinone + NADH + 5 H(+)(in) = a ubiquinol + NAD(+) + 4 H(+)(out). Core subunit of the mitochondrial membrane respiratory chain NADH dehydrogenase (Complex I) that is believed to belong to the minimal assembly required for catalysis. Complex I functions in the transfer of electrons from NADH to the respiratory chain. The immediate electron acceptor for the enzyme is believed to be ubiquinone. The chain is NADH-ubiquinone oxidoreductase chain 4L (nad4L) from Dictyostelium citrinum (Slime mold).